Here is a 268-residue protein sequence, read N- to C-terminus: Probable RNA methyltransferase C2A9.10 (268 aa).

One can recognise a Bin3-type SAM domain in the interval Asp23–Gly258.

This sequence belongs to the methyltransferase superfamily.

Functionally, probable RNA methyltransferase. The sequence is that of Probable RNA methyltransferase C2A9.10 from Schizosaccharomyces pombe (strain 972 / ATCC 24843) (Fission yeast).